The primary structure comprises 101 residues: uncharacterized protein (101 aa).

This is an uncharacterized protein from Bacillus subtilis (strain 168).